Consider the following 140-residue polypeptide: Large ribosomal subunit protein uL16 (140 aa).

Positions 1–17 are enriched in basic residues; sequence MPLMPKRVKHRKMHRGS. A disordered region spans residues 1–21; that stretch reads MPLMPKRVKHRKMHRGSRSGN.

This sequence belongs to the universal ribosomal protein uL16 family. As to quaternary structure, part of the 50S ribosomal subunit.

Its function is as follows. Binds 23S rRNA and is also seen to make contacts with the A and possibly P site tRNAs. The polypeptide is Large ribosomal subunit protein uL16 (Akkermansia muciniphila (strain ATCC BAA-835 / DSM 22959 / JCM 33894 / BCRC 81048 / CCUG 64013 / CIP 107961 / Muc)).